The sequence spans 1058 residues: Carbamoyl phosphate synthase large chain (1058 aa).

The segment at 1–401 (MPKRTDIQKI…SLLKACRSLE (401 aa)) is carboxyphosphate synthetic domain. 12 residues coordinate ATP: Arg-129, Arg-169, Gly-175, Gly-176, Arg-208, Ile-210, Glu-215, Gly-241, Ile-242, His-243, Gln-284, and Glu-298. The region spanning 133–327 (KQLMEELEQP…IAKLAAKIAV (195 aa)) is the ATP-grasp 1 domain. Gln-284, Glu-298, and Asn-300 together coordinate Mg(2+). The Mn(2+) site is built by Gln-284, Glu-298, and Asn-300. Residues 402–546 (IGVHHNEIPE…YSTYGWENES (145 aa)) are oligomerization domain. The segment at 547-929 (IRSDKESVLV…ALYKAFEASY (383 aa)) is carbamoyl phosphate synthetic domain. One can recognise an ATP-grasp 2 domain in the interval 671-861 (EQALKELDIP…MAQVATKLIL (191 aa)). The ATP site is built by Arg-707, Ser-746, Ile-748, Glu-752, Gly-777, Val-778, His-779, Ser-780, Gln-820, and Glu-832. 3 residues coordinate Mg(2+): Gln-820, Glu-832, and Asn-834. Residues Gln-820, Glu-832, and Asn-834 each coordinate Mn(2+). An MGS-like domain is found at 930–1058 (LHLPTFGNVV…ESRSFVTEAI (129 aa)). The tract at residues 930–1058 (LHLPTFGNVV…ESRSFVTEAI (129 aa)) is allosteric domain.

This sequence belongs to the CarB family. As to quaternary structure, composed of two chains; the small (or glutamine) chain promotes the hydrolysis of glutamine to ammonia, which is used by the large (or ammonia) chain to synthesize carbamoyl phosphate. Tetramer of heterodimers (alpha,beta)4. Mg(2+) is required as a cofactor. The cofactor is Mn(2+).

It carries out the reaction hydrogencarbonate + L-glutamine + 2 ATP + H2O = carbamoyl phosphate + L-glutamate + 2 ADP + phosphate + 2 H(+). The enzyme catalyses hydrogencarbonate + NH4(+) + 2 ATP = carbamoyl phosphate + 2 ADP + phosphate + 2 H(+). The protein operates within amino-acid biosynthesis; L-arginine biosynthesis; carbamoyl phosphate from bicarbonate: step 1/1. It functions in the pathway pyrimidine metabolism; UMP biosynthesis via de novo pathway; (S)-dihydroorotate from bicarbonate: step 1/3. In terms of biological role, large subunit of the glutamine-dependent carbamoyl phosphate synthetase (CPSase). CPSase catalyzes the formation of carbamoyl phosphate from the ammonia moiety of glutamine, carbonate, and phosphate donated by ATP, constituting the first step of 2 biosynthetic pathways, one leading to arginine and/or urea and the other to pyrimidine nucleotides. The large subunit (synthetase) binds the substrates ammonia (free or transferred from glutamine from the small subunit), hydrogencarbonate and ATP and carries out an ATP-coupled ligase reaction, activating hydrogencarbonate by forming carboxy phosphate which reacts with ammonia to form carbamoyl phosphate. In Streptococcus pneumoniae (strain JJA), this protein is Carbamoyl phosphate synthase large chain.